A 111-amino-acid polypeptide reads, in one-letter code: Putative pterin-4-alpha-carbinolamine dehydratase (111 aa).

It belongs to the pterin-4-alpha-carbinolamine dehydratase family.

It catalyses the reaction (4aS,6R)-4a-hydroxy-L-erythro-5,6,7,8-tetrahydrobiopterin = (6R)-L-erythro-6,7-dihydrobiopterin + H2O. The polypeptide is Putative pterin-4-alpha-carbinolamine dehydratase (Marinobacter nauticus (strain ATCC 700491 / DSM 11845 / VT8) (Marinobacter aquaeolei)).